We begin with the raw amino-acid sequence, 157 residues long: Endoribonuclease YbeY (157 aa).

Zn(2+)-binding residues include H113, H117, and H123.

The protein belongs to the endoribonuclease YbeY family. Zn(2+) serves as cofactor.

The protein localises to the cytoplasm. Its function is as follows. Single strand-specific metallo-endoribonuclease involved in late-stage 70S ribosome quality control and in maturation of the 3' terminus of the 16S rRNA. The chain is Endoribonuclease YbeY from Ehrlichia ruminantium (strain Welgevonden).